The chain runs to 471 residues: MEKQKNVGHIVQIFGPVIDVQFPNEHMPAILSALEVKINDESIIFEVAQHLGEGIVRAIAMSMTYNLSKGLEVYDTGSQISVPVGKQVLSRMFNVLGQPIDGGKPLDSFIKNPIHAKAPTYLEQKATSEILVTGIKVIDLLIPFIKGGKIGLFGGAGVGKTVLVQELINNIASKHGGLSVFAGVGERSREGNDLYFEMKKAGVLDKTALVFGQMNEPPGARMRVALSALTMAEYFRDYENQDVLLFIDNIFRFTQAGSEVSTLLGRIPSTVGYQPTLSTEMGQLQERITSTIRGSITSVQAVYVPADDITDPAPATTFSHLDAKTVLDRGIAALGIYPAVDPLASSSRALEPNIVGKKHYLVAKKVVQILQRFKELQDIIAILGVDELSESDKQVVARARRIRNFLSQPFFVAQKFSGIQGQFIKIQDTVNNFDELLSGKYDNIPEEAFLYVGTIDQALEKAKKMGWSEKN.

154 to 161 (GGAGVGKT) provides a ligand contact to ATP.

It belongs to the ATPase alpha/beta chains family. As to quaternary structure, F-type ATPases have 2 components, CF(1) - the catalytic core - and CF(0) - the membrane proton channel. CF(1) has five subunits: alpha(3), beta(3), gamma(1), delta(1), epsilon(1). CF(0) has three main subunits: a(1), b(2) and c(9-12). The alpha and beta chains form an alternating ring which encloses part of the gamma chain. CF(1) is attached to CF(0) by a central stalk formed by the gamma and epsilon chains, while a peripheral stalk is formed by the delta and b chains.

The protein localises to the cell membrane. It carries out the reaction ATP + H2O + 4 H(+)(in) = ADP + phosphate + 5 H(+)(out). In terms of biological role, produces ATP from ADP in the presence of a proton gradient across the membrane. The catalytic sites are hosted primarily by the beta subunits. In Mesomycoplasma hyopneumoniae (strain J / ATCC 25934 / NCTC 10110) (Mycoplasma hyopneumoniae), this protein is ATP synthase subunit beta.